The chain runs to 1333 residues: DNA-directed RNA polymerase subunit beta' (1333 aa).

Zn(2+) is bound by residues C60, C62, C75, and C78. 3 residues coordinate Mg(2+): D535, D537, and D539. The Zn(2+) site is built by C901, C983, C990, and C993.

This sequence belongs to the RNA polymerase beta' chain family. The RNAP catalytic core consists of 2 alpha, 1 beta, 1 beta' and 1 omega subunit. When a sigma factor is associated with the core the holoenzyme is formed, which can initiate transcription. It depends on Mg(2+) as a cofactor. Requires Zn(2+) as cofactor.

The catalysed reaction is RNA(n) + a ribonucleoside 5'-triphosphate = RNA(n+1) + diphosphate. Functionally, DNA-dependent RNA polymerase catalyzes the transcription of DNA into RNA using the four ribonucleoside triphosphates as substrates. The chain is DNA-directed RNA polymerase subunit beta' from Corynebacterium glutamicum (strain R).